Consider the following 289-residue polypeptide: GTPase Era (289 aa).

The Era-type G domain occupies 2–167 (KSGFVSIIGR…LDEICKLLPE (166 aa)). Residues 10-17 (GRTNAGKS) form a G1 region. Residue 10 to 17 (GRTNAGKS) coordinates GTP. Residues 36–40 (NATRR) are G2. The interval 57–60 (DTPG) is G3. Residues 57 to 61 (DTPGL) and 116 to 119 (TKVD) each bind GTP. Residues 116–119 (TKVD) form a G4 region. The segment at 146-148 (FST) is G5. The region spanning 194–274 (IYENLSDEIP…FLKLDVVVKK (81 aa)) is the KH type-2 domain.

This sequence belongs to the TRAFAC class TrmE-Era-EngA-EngB-Septin-like GTPase superfamily. Era GTPase family. As to quaternary structure, monomer.

The protein resides in the cytoplasm. Its subcellular location is the cell inner membrane. In terms of biological role, an essential GTPase that binds both GDP and GTP, with rapid nucleotide exchange. Plays a role in 16S rRNA processing and 30S ribosomal subunit biogenesis and possibly also in cell cycle regulation and energy metabolism. The chain is GTPase Era from Campylobacter concisus (strain 13826).